The following is a 173-amino-acid chain: Small ribosomal subunit protein uS5 (173 aa).

The S5 DRBM domain maps to 18 to 81; sequence LREKMIAVNR…EQARRGMFKV (64 aa).

The protein belongs to the universal ribosomal protein uS5 family. In terms of assembly, part of the 30S ribosomal subunit. Contacts proteins S4 and S8.

With S4 and S12 plays an important role in translational accuracy. In terms of biological role, located at the back of the 30S subunit body where it stabilizes the conformation of the head with respect to the body. This Bordetella avium (strain 197N) protein is Small ribosomal subunit protein uS5.